The sequence spans 307 residues: Porphobilinogen deaminase (307 aa).

Residue cysteine 241 is modified to S-(dipyrrolylmethanemethyl)cysteine.

The protein belongs to the HMBS family. In terms of assembly, monomer. The cofactor is dipyrromethane.

It carries out the reaction 4 porphobilinogen + H2O = hydroxymethylbilane + 4 NH4(+). It participates in porphyrin-containing compound metabolism; protoporphyrin-IX biosynthesis; coproporphyrinogen-III from 5-aminolevulinate: step 2/4. In terms of biological role, tetrapolymerization of the monopyrrole PBG into the hydroxymethylbilane pre-uroporphyrinogen in several discrete steps. The protein is Porphobilinogen deaminase of Coxiella burnetii (strain RSA 331 / Henzerling II).